The following is a 201-amino-acid chain: 3-isopropylmalate dehydratase small subunit (201 aa).

This sequence belongs to the LeuD family. LeuD type 1 subfamily. Heterodimer of LeuC and LeuD.

It carries out the reaction (2R,3S)-3-isopropylmalate = (2S)-2-isopropylmalate. It functions in the pathway amino-acid biosynthesis; L-leucine biosynthesis; L-leucine from 3-methyl-2-oxobutanoate: step 2/4. Its function is as follows. Catalyzes the isomerization between 2-isopropylmalate and 3-isopropylmalate, via the formation of 2-isopropylmaleate. This chain is 3-isopropylmalate dehydratase small subunit, found in Paracoccus denitrificans (strain Pd 1222).